Reading from the N-terminus, the 431-residue chain is CCA-adding enzyme (431 aa).

ATP is bound by residues Ser50 and Lys53. The CTP site is built by Ser50 and Lys53. Mg(2+)-binding residues include Asp61, Asp63, and Asp112. Positions 135, 155, and 164 each coordinate ATP. Residues His135, Lys155, and Tyr164 each coordinate CTP.

The protein belongs to the tRNA nucleotidyltransferase/poly(A) polymerase family. Archaeal CCA-adding enzyme subfamily. In terms of assembly, homodimer. Requires Mg(2+) as cofactor.

It carries out the reaction a tRNA precursor + 2 CTP + ATP = a tRNA with a 3' CCA end + 3 diphosphate. The enzyme catalyses a tRNA with a 3' CCA end + 2 CTP + ATP = a tRNA with a 3' CCACCA end + 3 diphosphate. Catalyzes the addition and repair of the essential 3'-terminal CCA sequence in tRNAs without using a nucleic acid template. Adds these three nucleotides in the order of C, C, and A to the tRNA nucleotide-73, using CTP and ATP as substrates and producing inorganic pyrophosphate. tRNA 3'-terminal CCA addition is required both for tRNA processing and repair. Also involved in tRNA surveillance by mediating tandem CCA addition to generate a CCACCA at the 3' terminus of unstable tRNAs. While stable tRNAs receive only 3'-terminal CCA, unstable tRNAs are marked with CCACCA and rapidly degraded. This is CCA-adding enzyme from Thermoplasma acidophilum (strain ATCC 25905 / DSM 1728 / JCM 9062 / NBRC 15155 / AMRC-C165).